The chain runs to 553 residues: Transmembrane protein DDB_G0292058 (553 aa).

Residues methionine 1–alanine 26 form the signal peptide. Helical transmembrane passes span isoleucine 80–phenylalanine 100 and valine 137–threonine 157. N-linked (GlcNAc...) asparagine glycans are attached at residues asparagine 162, asparagine 171, asparagine 178, and asparagine 195. 2 helical membrane passes run isoleucine 243–leucine 263 and serine 274–isoleucine 294. 6 N-linked (GlcNAc...) asparagine glycosylation sites follow: asparagine 315, asparagine 332, asparagine 351, asparagine 396, asparagine 405, and asparagine 462. A helical membrane pass occupies residues leucine 515 to isoleucine 535.

It is found in the membrane. This is Transmembrane protein DDB_G0292058 from Dictyostelium discoideum (Social amoeba).